A 525-amino-acid polypeptide reads, in one-letter code: GMP synthase [glutamine-hydrolyzing] (525 aa).

The Glutamine amidotransferase type-1 domain occupies 9–207; sequence RILILDFGSQ…VRDICQCEAL (199 aa). The active-site Nucleophile is C86. Residues H181 and E183 contribute to the active site. The GMPS ATP-PPase domain occupies 208-400; that stretch reads WTPAKIIDDA…LGLPYDMLYR (193 aa). Position 235–241 (235–241) interacts with ATP; the sequence is SGGVDSS.

In terms of assembly, homodimer.

The enzyme catalyses XMP + L-glutamine + ATP + H2O = GMP + L-glutamate + AMP + diphosphate + 2 H(+). It participates in purine metabolism; GMP biosynthesis; GMP from XMP (L-Gln route): step 1/1. Catalyzes the synthesis of GMP from XMP. The polypeptide is GMP synthase [glutamine-hydrolyzing] (Enterobacter sp. (strain 638)).